Reading from the N-terminus, the 133-residue chain is Small ribosomal subunit protein uS8 (133 aa).

Belongs to the universal ribosomal protein uS8 family. In terms of assembly, part of the 30S ribosomal subunit. Contacts proteins S5 and S12.

Its function is as follows. One of the primary rRNA binding proteins, it binds directly to 16S rRNA central domain where it helps coordinate assembly of the platform of the 30S subunit. The protein is Small ribosomal subunit protein uS8 of Gloeobacter violaceus (strain ATCC 29082 / PCC 7421).